Consider the following 322-residue polypeptide: ATP-dependent 6-phosphofructokinase (322 aa).

Gly-11 contributes to the ATP binding site. Position 21-25 (21-25) interacts with ADP; that stretch reads RAVTR. ATP-binding positions include 72–73 and 102–105; these read RC and GDGS. Residue Asp-103 participates in Mg(2+) binding. 127–129 is a binding site for substrate; sequence TID. Asp-129 acts as the Proton acceptor in catalysis. An ADP-binding site is contributed by Arg-156. Residues Arg-164 and 171-173 each bind substrate; that span reads MGR. Residues 187–189, Arg-213, and 215–217 each bind ADP; these read GAE and KKH. Residues Glu-224, Arg-245, and 251 to 254 each bind substrate; that span reads HIQR.

It belongs to the phosphofructokinase type A (PFKA) family. ATP-dependent PFK group I subfamily. Prokaryotic clade 'B1' sub-subfamily. In terms of assembly, homotetramer. Mg(2+) is required as a cofactor.

It is found in the cytoplasm. The enzyme catalyses beta-D-fructose 6-phosphate + ATP = beta-D-fructose 1,6-bisphosphate + ADP + H(+). Its pathway is carbohydrate degradation; glycolysis; D-glyceraldehyde 3-phosphate and glycerone phosphate from D-glucose: step 3/4. Its activity is regulated as follows. Allosterically activated by ADP and other diphosphonucleosides, and allosterically inhibited by phosphoenolpyruvate. Its function is as follows. Catalyzes the phosphorylation of D-fructose 6-phosphate to fructose 1,6-bisphosphate by ATP, the first committing step of glycolysis. The sequence is that of ATP-dependent 6-phosphofructokinase from Staphylococcus epidermidis (strain ATCC 12228 / FDA PCI 1200).